The sequence spans 263 residues: uncharacterized protein (263 aa).

In terms of domain architecture, GST N-terminal spans 44–131; sequence QVYSLGTPNG…YLADKFNHLI (88 aa). Residues 134-263 enclose the GST C-terminal domain; that stretch reads DWAQRTEVLN…ALEVDYKAIK (130 aa).

It belongs to the GST superfamily. In terms of assembly, homodimer.

This is an uncharacterized protein from Streptococcus mutans serotype c (strain ATCC 700610 / UA159).